We begin with the raw amino-acid sequence, 430 residues long: Serine--tRNA ligase (430 aa).

Position 237–239 (237–239) interacts with L-serine; that stretch reads TAE. 268-270 provides a ligand contact to ATP; that stretch reads RSE. Glu291 contacts L-serine. Residue 355–358 coordinates ATP; that stretch reads EISS. Ser391 is an L-serine binding site.

The protein belongs to the class-II aminoacyl-tRNA synthetase family. Type-1 seryl-tRNA synthetase subfamily. As to quaternary structure, homodimer. The tRNA molecule binds across the dimer.

The protein resides in the cytoplasm. It carries out the reaction tRNA(Ser) + L-serine + ATP = L-seryl-tRNA(Ser) + AMP + diphosphate + H(+). The enzyme catalyses tRNA(Sec) + L-serine + ATP = L-seryl-tRNA(Sec) + AMP + diphosphate + H(+). It participates in aminoacyl-tRNA biosynthesis; selenocysteinyl-tRNA(Sec) biosynthesis; L-seryl-tRNA(Sec) from L-serine and tRNA(Sec): step 1/1. Catalyzes the attachment of serine to tRNA(Ser). Is also able to aminoacylate tRNA(Sec) with serine, to form the misacylated tRNA L-seryl-tRNA(Sec), which will be further converted into selenocysteinyl-tRNA(Sec). This chain is Serine--tRNA ligase, found in Salmonella enteritidis PT4 (strain P125109).